We begin with the raw amino-acid sequence, 346 residues long: Upstream stimulatory factor 2 (346 aa).

Disordered regions lie at residues 1–44 (MDML…PGAE) and 215–244 (APRTHPYSPKIDGTRTPRDERRRAQHNEVE). The segment covering 11–20 (ASSATAAAAA) has biased composition (low complexity). Over residues 226–244 (DGTRTPRDERRRAQHNEVE) the composition is skewed to basic and acidic residues. Residues 235–290 (RRRAQHNEVERRRRDKINNWIVQLSKIIPDCHADNSKTGASKGGILSKACDYIREL) form the bHLH domain. A leucine-zipper region spans residues 307–328 (LQMDNELLRQQIEELKNENALL).

As to quaternary structure, efficient DNA binding requires dimerization with another bHLH protein. Binds DNA as a homodimer or a heterodimer (USF1/USF2). Interacts with MAF.

Its subcellular location is the nucleus. In terms of biological role, transcription factor that binds to a symmetrical DNA sequence (E-boxes) (5'-CACGTG-3') that is found in a variety of viral and cellular promoters. The chain is Upstream stimulatory factor 2 (Usf2) from Mus musculus (Mouse).